Reading from the N-terminus, the 450-residue chain is Sorting nexin-4 (450 aa).

The residue at position 1 (methionine 1) is an N-acetylmethionine. The tract at residues 1 to 46 is disordered; the sequence is MEQAPPDPERQLQPAPLEPLGSPDAGLGAAVGKEAEGAGEESSGVD. Serine 22 carries the post-translational modification Phosphoserine. A PX domain is found at 61–187; it reads SVSEAEKRTG…YLFLTQEGNW (127 aa). The a 1,2-diacyl-sn-glycero-3-phospho-(1D-myo-inositol-3-phosphate) site is built by arginine 106, serine 108, lysine 132, and arginine 154.

It belongs to the sorting nexin family. As to quaternary structure, heterodimer; heterodimerizes with SNX7 or SNX30. Interacts with WWC1/KIBRA. Identified in a complex with WWC1/KIBRA and dynein components DYNLL1 and DYNC1I2. Interacts with BIN1.

It localises to the early endosome membrane. In terms of biological role, involved in the regulation of endocytosis and in several stages of intracellular trafficking. Plays a role in recycling endocytosed transferrin receptor and prevent its degradation. Involved in autophagosome assembly by regulating trafficking and recycling of phospholipid scramblase ATG9A. This Homo sapiens (Human) protein is Sorting nexin-4.